The chain runs to 277 residues: Movement protein (277 aa).

This sequence belongs to the cucumovirus movement protein family.

Its subcellular location is the host cell junction. The protein resides in the host plasmodesma. Transports viral genome to neighboring plant cells directly through plasmosdesmata, without any budding. The movement protein allows efficient cell to cell propagation, by bypassing the host cell wall barrier. Acts by forming a tubular structure at the host plasmodesmata, enlarging it enough to allow free passage of virion capsids. The protein is Movement protein of Canna (Florist's daisy).